The chain runs to 634 residues: MNYVASNIQVLKGLEAVRKRPGMYIGSVSINGLHHLVYEVVDNSIDEALAGFCDRIDVIINLDNTITVIDNGRGIPTDIHEEEGISALELVLTKLHSGGKFNKGTYKVSGGLHGVGISVVNALSSFLEVYVNRDGKIFRQTFSKGIPTSKVEVVGESSVTGTKVTFLADSEIFETLDYNFDVLEKRLKELAFLNDKIYISIEDKRIGKEKSSKFYFEGGIKSFVDYLTNDSKAFQSEPYYIDGFINDVIVNVGLKWTESYSDNILSFVNNINTREGGTHVMGFRSGLTKAMNEAFKNSKISKKDIPNLTGDDFKEGLTAVISVKVPEPQFEGQTKSKLGNSEIRKIVEVVVYEHLLEIINLNPLEIDTILGKAIKAARAREAARKARESERKKNAFESLALPGKLADCTSKNPLEREIYIVEGDSAGGSAKMGRNRFFQAILPLWGKMLNVEKTREDKVITNDKLIPIIASLGAGVGKTFDITKLRYHKIIIMADADVDGSHIRTLLLAFFFRYMRDLIENGYIYIAMPPLYKIKYDNRIYYFYEEKEKEKFLDSIETKNRNSISLQRYKGLGEMNPTQLWETTMDPARRKMRLMNIDDAIEAEKIFVTLMGDLVEPRKEFIEQNALNVINLDV.

Residues 416–530 form the Toprim domain; it reads REIYIVEGDS…NGYIYIAMPP (115 aa). The Mg(2+) site is built by Glu422, Asp495, and Asp497.

Belongs to the type II topoisomerase GyrB family. In terms of assembly, heterotetramer, composed of two GyrA and two GyrB chains. In the heterotetramer, GyrA contains the active site tyrosine that forms a transient covalent intermediate with DNA, while GyrB binds cofactors and catalyzes ATP hydrolysis. It depends on Mg(2+) as a cofactor. Mn(2+) is required as a cofactor. Ca(2+) serves as cofactor.

The protein resides in the cytoplasm. The enzyme catalyses ATP-dependent breakage, passage and rejoining of double-stranded DNA.. Its function is as follows. A type II topoisomerase that negatively supercoils closed circular double-stranded (ds) DNA in an ATP-dependent manner to modulate DNA topology and maintain chromosomes in an underwound state. Negative supercoiling favors strand separation, and DNA replication, transcription, recombination and repair, all of which involve strand separation. Also able to catalyze the interconversion of other topological isomers of dsDNA rings, including catenanes and knotted rings. Type II topoisomerases break and join 2 DNA strands simultaneously in an ATP-dependent manner. This Borreliella burgdorferi (strain ATCC 35210 / DSM 4680 / CIP 102532 / B31) (Borrelia burgdorferi) protein is DNA gyrase subunit B.